A 380-amino-acid chain; its full sequence is Alpha-N-acetylneuraminate alpha-2,8-sialyltransferase ST8SIA3 (380 aa).

At 1 to 9 (MRNCKMARV) the chain is on the cytoplasmic side. A helical; Signal-anchor for type II membrane protein membrane pass occupies residues 10-33 (ASVLGLVMLSVALLNLSLISYVSL). The Lumenal segment spans residues 34–380 (KKENIFATPK…LTKLTLSHCA (347 aa)). N-linked (GlcNAc...) asparagine glycans are attached at residues Asn93 and Asn113. Disulfide bonds link Cys162-Cys313 and Cys176-Cys379. CMP-N-acetyl-beta-neuraminate is bound by residues Asn167 and Asn190. An N-linked (GlcNAc...) asparagine glycan is attached at Asn206. Positions 300, 301, 302, 322, 336, and 337 each coordinate CMP-N-acetyl-beta-neuraminate. His354 acts as the Proton donor/acceptor in catalysis.

This sequence belongs to the glycosyltransferase 29 family. Homodimer. In terms of processing, autopolysialylated.

The protein localises to the golgi apparatus membrane. It catalyses the reaction [N-acetyl-alpha-D-neuraminosyl-(2-&gt;8)](n) + CMP-N-acetyl-beta-neuraminate = [N-acetyl-alpha-D-neuraminosyl-(2-&gt;8)](n+1) + CMP + H(+). The enzyme catalyses alpha-Neu5Ac-(2-&gt;3)-beta-D-Gal-(1-&gt;4)-6S-D-GlcNAc + CMP-N-acetyl-beta-neuraminate = alpha-Neu5Ac-(2-&gt;8)-alpha-Neu5Ac-(2-&gt;3)-beta-D-Gal-(1-&gt;4)-6S-D-GlcNAc + CMP + H(+). The catalysed reaction is a ganglioside GM3 (d18:1(4E)) + CMP-N-acetyl-beta-neuraminate = a ganglioside GD3 (d18:1(4E)) + CMP + H(+). It carries out the reaction a ganglioside GM3 + CMP-N-acetyl-beta-neuraminate = a ganglioside GD3 + CMP + H(+). It catalyses the reaction an N-acetyl-alpha-neuraminyl-(2-&gt;3)-beta-D-galactosyl derivative + CMP-N-acetyl-beta-neuraminate = an N-acetyl-alpha-neuraminyl-(2-&gt;8)-N-acetyl-alpha-neuraminyl-(2-&gt;3)-beta-D-galactosyl derivative + CMP + H(+). The enzyme catalyses an N-acetyl-alpha-neuraminyl-(2-&gt;3)-beta-D-galactosyl-(1-&gt;4)-N-acetyl-beta-D-glucosaminyl derivative + CMP-N-acetyl-beta-neuraminate = an alpha-Neu5Ac-(2-&gt;8)-alpha-Neu5Ac-(2-&gt;3)-beta-D-Gal-(1-&gt;4)-beta-D-GlcNAc derivative + CMP + H(+). Its pathway is protein modification; protein glycosylation. Catalyzes the transfer of sialic acid from a CMP-linked sialic acid donor onto a terminal alpha-2,3-, alpha-2,6-, or alpha-2,8-linked sialic acid of an acceptor, such as N-linked oligosaccharides of glycoproteins and glycolipids through alpha-2,8-linkages. Forms oligosialic and polysialic acid on various sialylated N-acetyllactosamine oligosaccharides of glycoproteins, including FETUB N-glycans, a2-HS-glycoprotein (AHSG) and alpha 2,3-sialylated glycosphingolipids, such as alpha 2,3-sialylparagloboside and ganglioside GM3 and to a lesser extent NCAM1 N-glycans. However, it is much more specific to N-linked oligosaccharides of glycoproteins than glycosphingolipids. 2,3-sialylparagloboside serves as the best acceptor substrate among the glycolipids. alpha-Neu5Ac-(2-&gt;8)-alpha-Neu5Ac-(2-&gt;3)-beta-D-Gal-(1-&gt;4)-6S-D-GlcNAc and monosialyl and disialyl N-acetyllactosamines are the best acceptor substrates among glycoproteins. May plays critical role in the striatum by mediating the formation of disialylated and trisialylated terminal glycotopes on N- and O-glycans of specific striatal proteins, regulating their distribution in lipid rafts, affecting their interaction with other binding partners, and subsequently modulating striatal functions. The protein is Alpha-N-acetylneuraminate alpha-2,8-sialyltransferase ST8SIA3 of Pan troglodytes (Chimpanzee).